A 146-amino-acid chain; its full sequence is NADH-quinone oxidoreductase subunit A (146 aa).

The next 3 helical transmembrane spans lie at 14–34 (FALFLIIAIGLCVFMLTGGFL), 68–88 (LVAMFFVIFDVEALYLYAWAV), and 96–116 (IGFIEATIFILVLLAGLIYLV).

It belongs to the complex I subunit 3 family. NDH-1 is composed of 13 different subunits. Subunits NuoA, H, J, K, L, M, N constitute the membrane sector of the complex.

The protein localises to the cell inner membrane. The catalysed reaction is a quinone + NADH + 5 H(+)(in) = a quinol + NAD(+) + 4 H(+)(out). Functionally, NDH-1 shuttles electrons from NADH, via FMN and iron-sulfur (Fe-S) centers, to quinones in the respiratory chain. The immediate electron acceptor for the enzyme in this species is believed to be ubiquinone. Couples the redox reaction to proton translocation (for every two electrons transferred, four hydrogen ions are translocated across the cytoplasmic membrane), and thus conserves the redox energy in a proton gradient. In Pectobacterium atrosepticum (strain SCRI 1043 / ATCC BAA-672) (Erwinia carotovora subsp. atroseptica), this protein is NADH-quinone oxidoreductase subunit A.